The sequence spans 144 residues: Small ribosomal subunit protein uS19 (144 aa).

It belongs to the universal ribosomal protein uS19 family.

Its function is as follows. Protein S19 forms a complex with S13 that binds strongly to the 16S ribosomal RNA. This is Small ribosomal subunit protein uS19 (rps19) from Aeropyrum pernix (strain ATCC 700893 / DSM 11879 / JCM 9820 / NBRC 100138 / K1).